Consider the following 255-residue polypeptide: Ras-like protein family member 12 (255 aa).

GTP is bound by residues 30–37 (GAMGSGKS), 77–81 (DTADQ), and 137–140 (NKVD).

The protein belongs to the small GTPase superfamily. Ras family.

It carries out the reaction GTP + H2O = GDP + phosphate + H(+). This chain is Ras-like protein family member 12 (RASL12), found in Danio rerio (Zebrafish).